Consider the following 756-residue polypeptide: Cartilage oligomeric matrix protein (756 aa).

Positions 1–20 (MVLAAARVLLLTLAALGASG) are cleaved as a signal peptide. Positions 22 to 85 (GQMPLGGDLG…PARTPKLTVR (64 aa)) are COMP N-terminal. Residues 86–125 (PLSQCSPGFCFPGVACTETANGARCGPCPEGFTGNGSHCA) form the EGF-like 1 domain. Disulfide bonds link C90-C101, C95-C110, C113-C124, C130-C141, C135-C150, C183-C196, C190-C205, C228-C242, C236-C252, and C254-C265. N120 carries an N-linked (GlcNAc...) asparagine glycan. Residues 126–178 (DVNECTAHPCFPRVRCINTSPGFRCEACPPGFSGPTHEGVGLAFAKANKQVCT) enclose the EGF-like 2; calcium-binding domain. The region spanning 179–218 (DINECETGQHNCVPNSVCVNTVGSFQCGPCQPGFVGDQAS) is the EGF-like 3; calcium-binding domain. The EGF-like 4 domain maps to 224 to 266 (PQRFCPDGTPSPCHEKADCVLERDGSRSCVCAVGWAGNGLICG). 8 TSP type-3 repeats span residues 267–299 (RDTD…NSGQ), 300–335 (EDVD…NPDQ), 336–358 (RNTD…NDDQ), 359–394 (KDTD…NSDQ), 395–417 (KDTD…NADQ), 418–455 (RDVD…NSAQ), 456–491 (QDSD…NPGQ), and 492–527 (EDMD…EVTL). Residues 322–502 (NEKDNCPLVR…DMDRDGVGDA (181 aa)) are disordered. Composition is skewed to basic and acidic residues over residues 333–345 (PDQR…KWGD), 351–369 (RSQK…RGDA), and 415–425 (ADQRDVDHDFV). A Cell attachment site motif is present at residues 366–368 (RGD). A compositionally biased stretch (acidic residues) spans 466 to 475 (ACDDDDDNDG). Residues 526–756 (TLTDFRAFQT…DYEAQRLLQA (231 aa)) form a mediates cell survival and induction of the IAP family of survival proteins region. Residues 531–745 (RAFQTVVLDP…LRYRCNDTIP (215 aa)) enclose the TSP C-terminal domain. An N-linked (GlcNAc...) asparagine glycan is attached at N741.

It belongs to the thrombospondin family. Pentamer; disulfide-linked. Exists in a more compact conformation in the presence of calcium and shows a more extended conformation in the absence of calcium. Interacts with ITGB3, ITGA5 and FN1. Binding to FN1 requires the presence of divalent cations (Ca(2+), Mg(2+) or Mn(2+)). The greatest amount of binding is seen in the presence of Mn(2+). Interacts with MATN1, MATN3, MATN4 and ACAN. Binds heparin, heparan sulfate and chondroitin sulfate. EDTA dimishes significantly its binding to ACAN and abolishes its binding to MATN3, MATN4 and chondroitin sulfate. Interacts with collagen I, II and IX, and interaction with these collagens is dependent on the presence of zinc ions. Interacts with ADAMTS12. Interacts with ITGA7. It depends on Ca(2+) as a cofactor. In terms of processing, proteolytically cleaved by metalloproteases ADAMTS4 and ADAMTS1 with ADAMTS4 showing more potent activity.

It is found in the secreted. Its subcellular location is the extracellular space. It localises to the extracellular matrix. Functionally, plays a role in the structural integrity of cartilage via its interaction with other extracellular matrix proteins such as the collagens and fibronectin. Can mediate the interaction of chondrocytes with the cartilage extracellular matrix through interaction with cell surface integrin receptors. Could play a role in the pathogenesis of osteoarthritis. Potent suppressor of apoptosis in both primary chondrocytes and transformed cells. Suppresses apoptosis by blocking the activation of caspase-3 and by inducing the IAP family of survival proteins (BIRC3, BIRC2, BIRC5 and XIAP). Essential for maintaining a vascular smooth muscle cells (VSMCs) contractile/differentiated phenotype under physiological and pathological stimuli. Maintains this phenotype of VSMCs by interacting with ITGA7. In Bos taurus (Bovine), this protein is Cartilage oligomeric matrix protein (COMP).